Here is a 526-residue protein sequence, read N- to C-terminus: Probable Xaa-Pro aminopeptidase GLRG_02280 (526 aa).

Mn(2+)-binding residues include D285, D296, E454, and E495.

This sequence belongs to the peptidase M24B family. The cofactor is Mn(2+).

The enzyme catalyses Release of any N-terminal amino acid, including proline, that is linked to proline, even from a dipeptide or tripeptide.. In terms of biological role, catalyzes the removal of a penultimate prolyl residue from the N-termini of peptides. The polypeptide is Probable Xaa-Pro aminopeptidase GLRG_02280 (Colletotrichum graminicola (strain M1.001 / M2 / FGSC 10212) (Maize anthracnose fungus)).